The following is a 371-amino-acid chain: Cytochrome b (371 aa).

4 helical membrane passes run 25–45 (FGSMLLICLTLQIMTGFFLAI), 69–90 (WIMQNLHTIGASMFFICIYTHI), 105–125 (WLSGTTLLITLMATAFFGYVL), and 170–190 (FFALHFIIPFAIISLSSIHII). 2 residues coordinate heme b: H75 and H89. 2 residues coordinate heme b: H174 and H188. H193 provides a ligand contact to a ubiquinone. A run of 4 helical transmembrane segments spans residues 218-238 (YKDTLTSTFMLITLFIILSFT), 280-300 (LGGTLALLMSVIILTTMPFTH), 312-332 (LAQTMFWMLIATFITITWTAS), and 339-358 (FIIISQTTSIFYFSFFIMNP).

This sequence belongs to the cytochrome b family. The cytochrome bc1 complex contains 3 respiratory subunits (MT-CYB, CYC1 and UQCRFS1), 2 core proteins (UQCRC1 and UQCRC2) and probably 6 low-molecular weight proteins. It depends on heme b as a cofactor.

Its subcellular location is the mitochondrion inner membrane. Functionally, component of the ubiquinol-cytochrome c reductase complex (complex III or cytochrome b-c1 complex) that is part of the mitochondrial respiratory chain. The b-c1 complex mediates electron transfer from ubiquinol to cytochrome c. Contributes to the generation of a proton gradient across the mitochondrial membrane that is then used for ATP synthesis. The sequence is that of Cytochrome b (MT-CYB) from Sinomicrurus macclellandi (Macclelland's coral snake).